The following is a 1548-amino-acid chain: UDP-glucose:glycoprotein glucosyltransferase (1548 aa).

A signal peptide spans 1–22; it reads MLRAVALCVSVVLIALYTPTSG. Asparagine 181 carries an N-linked (GlcNAc...) asparagine glycan. The span at 243 to 253 shows a compositional bias: basic and acidic residues; sequence TEYKSQDDAPK. The tract at residues 243-265 is disordered; that stretch reads TEYKSQDDAPKPEAGSTSDEDLA. Asparagine 266 and asparagine 864 each carry an N-linked (GlcNAc...) asparagine glycan. A glucosyltransferase region spans residues 1227–1548; it reads SANQAATDED…PSHEPKHGEL (322 aa). Positions 1512–1523 are enriched in basic and acidic residues; the sequence is EDHENSHSRDSA. Residues 1512 to 1548 are disordered; the sequence is EDHENSHSRDSAVDDSVDDSVEVTTVTPSHEPKHGEL. The Prevents secretion from ER motif lies at 1545–1548; the sequence is HGEL.

The protein belongs to the glycosyltransferase 8 family. Monomer. May interact with CG7484/Sep15. Ca(2+) is required as a cofactor. It depends on Mn(2+) as a cofactor.

The protein resides in the endoplasmic reticulum lumen. It localises to the endoplasmic reticulum-Golgi intermediate compartment. It catalyses the reaction N(4)-(alpha-D-Man-(1-&gt;2)-alpha-D-Man-(1-&gt;2)-alpha-D-Man-(1-&gt;3)-[alpha-D-Man-(1-&gt;2)-alpha-D-Man-(1-&gt;3)-[alpha-D-Man-(1-&gt;2)-alpha-D-Man-(1-&gt;6)]-alpha-D-Man-(1-&gt;6)]-beta-D-Man-(1-&gt;4)-beta-D-GlcNAc-(1-&gt;4)-beta-D-GlcNAc)-L-asparaginyl-[protein] (N-glucan mannose isomer 9A1,2,3B1,2,3) + UDP-alpha-D-glucose = N(4)-(alpha-D-Glc-(1-&gt;3)-alpha-D-Man-(1-&gt;2)-alpha-D-Man-(1-&gt;2)-alpha-D-Man-(1-&gt;3)-[alpha-D-Man-(1-&gt;2)-alpha-D-Man-(1-&gt;3)-[alpha-D-Man-(1-&gt;2)-alpha-D-Man-(1-&gt;6)]-alpha-D-Man-(1-&gt;6)]-beta-D-Man-(1-&gt;4)-beta-D-GlcNAc-(1-&gt;4)-beta-D-GlcNAc)-L-asparaginyl-[protein] + UDP + H(+). It functions in the pathway protein modification; protein glycosylation. Recognizes glycoproteins with minor folding defects. Reglucosylates single N-glycans near the misfolded part of the protein, thus providing quality control for protein folding in the endoplasmic reticulum. Reglucosylated proteins are recognized by calreticulin for recycling to the endoplasmic reticulum and refolding or degradation. This is UDP-glucose:glycoprotein glucosyltransferase from Drosophila melanogaster (Fruit fly).